We begin with the raw amino-acid sequence, 926 residues long: Piwi-like protein Ago3 (926 aa).

The segment at 1–62 (MADPGKGRGR…PSTSGVSIGG (62 aa)) is disordered. A compositionally biased stretch (low complexity) spans 26–56 (SPSQSESQSPESTPEQSTAPSTIASATPSTS). Residues 339–455 (TVLSLIKEVV…LIPELCQLTG (117 aa)) form the PAZ domain. One can recognise a Piwi domain in the interval 620 to 912 (LVVAICSTKR…LSYLVGQCVH (293 aa)). Mg(2+) is bound at residue glutamine 672. Catalysis depends on residues aspartate 697, glutamate 735, aspartate 767, and histidine 901. Mg(2+) is bound at residue leucine 926.

The protein belongs to the argonaute family. Piwi subfamily. As to quaternary structure, interacts (when symmetrically methylated) with Papi/TDRKH. Interacts with Vasa. The cofactor is Mg(2+). Arginine methylation is required for the interaction with Tudor domain-containing protein Papi/TDRKH. Highly expressed in the larval testis, pupal ovary and adult eggs.

The protein resides in the cytoplasm. Functionally, endoribonuclease that plays a central role during spermatogenesis by repressing transposable elements and preventing their mobilization, which is essential for the germline integrity. Plays an essential role in meiotic differentiation of spermatocytes, germ cell differentiation and in self-renewal of spermatogonial stem cells. Its presence in oocytes suggests that it may participate in similar functions during oogenesis in females. Acts via the piRNA metabolic process, which mediates the repression of transposable elements during meiosis by forming complexes composed of piRNAs and Piwi proteins and govern the methylation and subsequent repression of transposons. Directly binds piRNAs, a class of 24 to 30 nucleotide RNAs that are generated by a Dicer-independent mechanism and are primarily derived from transposons and other repeated sequence elements. Strongly prefers a have adenine at position 10 of their guide (g10A preference). Plays a key role in the piRNA amplification loop, also named ping-pong amplification cycle: antisense piRNA-bound Siwi and sense piRNA-bound Ago3 reciprocally cleave complementary transcripts, to couple the amplification of piRNAs with the repression of transposable elements. This is Piwi-like protein Ago3 (AGO3) from Bombyx mori (Silk moth).